Here is a 3425-residue protein sequence, read N- to C-terminus: Genome polyprotein (3425 aa).

Residues 3 to 16 are interaction with host EXOC1; sequence NKKPGRPGSGRVVN. A hydrophobic; homodimerization of capsid protein C region spans residues 38-73; sequence VLRGAGPIRFVLALLTFFKFTALRPTIGMLKRWKLV. The propeptide at 105 to 120 is ER anchor for the capsid protein C, removed in mature form by serine protease NS3; that stretch reads GGSCSWIIMLLPIVAG. A helical transmembrane segment spans residues 105–125; that stretch reads GGSCSWIIMLLPIVAGLKLGN. Residue Asn-135 is glycosylated (N-linked (GlcNAc...) asparagine; by host). A run of 2 helical transmembrane segments spans residues 247-267 and 273-293; these read WALR…NLGT and IIFT…CLGM. 6 cysteine pairs are disulfide-bonded: Cys-290/Cys-317, Cys-347/Cys-403, Cys-361/Cys-392, Cys-379/Cys-408, Cys-477/Cys-575, and Cys-592/Cys-623. Residues 385–398 are fusion peptide; the sequence is DRGWGNGCGLFGKG. The next 2 helical transmembrane spans lie at 740–760 and 768–788; these read LFGG…LWMG and ISMT…NVNA. Residues Cys-792 and Cys-803 are joined by a disulfide bond. Residues Asn-918, Asn-963, and Asn-995 are each glycosylated (N-linked (GlcNAc...) asparagine; by host). Cystine bridges form between Cys-967/Cys-1011, Cys-1068/Cys-1117, Cys-1079/Cys-1100, and Cys-1101/Cys-1104. Helical transmembrane passes span 1138–1158, 1169–1189, 1214–1234, 1290–1310, 1337–1357, 1369–1389, and 1395–1415; these read VMAF…VMIV, TAPI…FGGI, IVHL…IGFL, FALP…IDVV, MLLG…FAGL, WPVS…GGIA, and SMAI…VTGF. Positions 1421 to 1460 are interacts with and activates NS3 protease; sequence LEKASDISWSEEARVTGASQRFDVEIDQDGNMRLLNDPGV. The region spanning 1499–1676 is the Peptidase S7 domain; it reads GGVIWDVPAP…EKKEEEVPQV (178 aa). Residues His-1549, Asp-1573, and Ser-1633 each act as charge relay system; for serine protease NS3 activity in the active site. The 157-residue stretch at 1679–1835 folds into the Helicase ATP-binding domain; sequence ENMLRKRQLT…DSNSPITDIE (157 aa). The interval 1683–1686 is important for RNA-binding; the sequence is RKRQ. 1692-1699 contributes to the ATP binding site; sequence LHPGSGKT. A DEAH box motif is present at residues 1783–1786; the sequence is DEAH. One can recognise a Helicase C-terminal domain in the interval 1845–2011; that stretch reads SGYEWITDFQ…GLVAQLYGPE (167 aa). Positions 2162–2166 are regulates the ATPase activity of NS3 helicase; sequence EELPE. A run of 8 helical transmembrane segments spans residues 2169–2189, 2194–2214, 2216–2236, 2252–2272, 2306–2326, 2334–2354, 2371–2391, and 2441–2461; these read ETFL…LFFV, LGKT…LWIA, VPAQ…IVLI, VFMI…MGWL, AWAA…HLII, LMAM…MPFV, FTMT…AFLV, and CVLV…LTLT. One can recognise an mRNA cap 0-1 NS5-type MT domain in the interval 2521 to 2786; the sequence is GGGTGRTLGE…DVDLGSGTRA (266 aa). Ser-2576 is a binding site for S-adenosyl-L-methionine. A Phosphoserine modification is found at Ser-2576. Catalysis depends on Lys-2581, which acts as the For 2'-O-MTase activity. Residues Gly-2606, Trp-2607, Thr-2624, Lys-2625, and Val-2652 each coordinate S-adenosyl-L-methionine. The active-site For 2'-O-MTase activity is Asp-2666. Ile-2667 is a binding site for S-adenosyl-L-methionine. Catalysis depends on for 2'-O-MTase activity residues Lys-2702 and Glu-2738. Residue Tyr-2740 participates in S-adenosyl-L-methionine binding. Zn(2+)-binding residues include Glu-2960, His-2964, Cys-2969, and Cys-2972. One can recognise a RdRp catalytic domain in the interval 3050–3202; the sequence is GLMYADDTAG…KPADDRFATA (153 aa). 3 residues coordinate Zn(2+): His-3237, Cys-3253, and Cys-3372. Residues 3423-3425 carry the PDZ-binding motif; that stretch reads GVL.

The protein in the N-terminal section; belongs to the class I-like SAM-binding methyltransferase superfamily. mRNA cap 0-1 NS5-type methyltransferase family. In terms of assembly, homodimer. Forms heterodimers with envelope protein E in the endoplasmic reticulum and Golgi. As to quaternary structure, homodimer; in the endoplasmic reticulum and Golgi. Interacts with protein prM. Interacts with non-structural protein 1. In terms of assembly, homodimer; Homohexamer when secreted. Interacts with envelope protein E. NS1 interacts with NS4B. Interacts with host MAVS (via C-terminus); this interaction blocks the interaction of MAVS with RIGI or IFIH1/MDA5. Interacts (via N-terminus) with serine protease NS3. As to quaternary structure, forms a heterodimer with serine protease NS3. May form homooligomers. In terms of assembly, forms a heterodimer with NS2B. Interacts with non-structural protein 2A (via N-terminus). Interacts with NS4B. Interacts with unphosphorylated RNA-directed RNA polymerase NS5; this interaction stimulates RNA-directed RNA polymerase NS5 guanylyltransferase activity. Interacts with serine protease NS3. As to quaternary structure, homodimer. Post-translationally, specific enzymatic cleavages in vivo yield mature proteins. Cleavages in the lumen of endoplasmic reticulum are performed by host signal peptidase, whereas cleavages in the cytoplasmic side are performed by serine protease NS3. Signal cleavage at the 2K-4B site requires a prior NS3 protease-mediated cleavage at the 4A-2K site. Both NS2A and NS2B proteins are required in cis for NS2A/2B proteolytic processing. In terms of processing, cleaved in post-Golgi vesicles by a host furin, releasing the mature small envelope protein M, and peptide pr. This cleavage is incomplete as up to 30% of viral particles still carry uncleaved prM. N-glycosylated. Post-translationally, N-glycosylated. The excreted form is glycosylated and this is required for efficient secretion of the protein from infected cells. In terms of processing, phosphorylated on serines residues. This phosphorylation may trigger NS5 nuclear localization.

Its subcellular location is the virion. The protein resides in the host nucleus. The protein localises to the host cytoplasm. It is found in the host perinuclear region. It localises to the secreted. Its subcellular location is the virion membrane. The protein resides in the host endoplasmic reticulum membrane. It catalyses the reaction Selective hydrolysis of -Xaa-Xaa-|-Yaa- bonds in which each of the Xaa can be either Arg or Lys and Yaa can be either Ser or Ala.. The enzyme catalyses RNA(n) + a ribonucleoside 5'-triphosphate = RNA(n+1) + diphosphate. It carries out the reaction a ribonucleoside 5'-triphosphate + H2O = a ribonucleoside 5'-diphosphate + phosphate + H(+). The catalysed reaction is ATP + H2O = ADP + phosphate + H(+). It catalyses the reaction a 5'-end (5'-triphosphoguanosine)-ribonucleoside in mRNA + S-adenosyl-L-methionine = a 5'-end (N(7)-methyl 5'-triphosphoguanosine)-ribonucleoside in mRNA + S-adenosyl-L-homocysteine. The enzyme catalyses a 5'-end (N(7)-methyl 5'-triphosphoguanosine)-ribonucleoside in mRNA + S-adenosyl-L-methionine = a 5'-end (N(7)-methyl 5'-triphosphoguanosine)-(2'-O-methyl-ribonucleoside) in mRNA + S-adenosyl-L-homocysteine + H(+). In terms of biological role, capsid protein self-assembles to form an icosahedral capsid about 40 nm in diameter. Plays a role in virus budding by binding to the cell membrane and gathering the viral RNA into a nucleocapsid that forms the core of a mature virus particle. Its function is as follows. Prevents premature fusion activity of envelope proteins in trans-Golgi by binding to envelope protein E at pH6.0. After virion release in extracellular space, gets dissociated from E dimers. Functionally, acts as a chaperone for envelope protein E during intracellular virion assembly by masking and inactivating envelope protein E fusion peptide. prM is the only viral peptide matured by host furin in the trans-Golgi network probably to avoid catastrophic activation of the viral fusion activity in acidic Golgi compartment prior to virion release. prM-E cleavage is inefficient, and many virions are only partially matured. These uncleaved prM would play a role in immune evasion. May play a role in virus budding. Exerts cytotoxic effects by activating a mitochondrial apoptotic pathway through M ectodomain. May display a viroporin activity. In terms of biological role, binds to host cell surface receptor and mediates fusion between viral and cellular membranes. Envelope protein is synthesized in the endoplasmic reticulum in the form of heterodimer with protein prM. They play a role in virion budding in the ER, and the newly formed immature particle is covered with 60 spikes composed of heterodimer between precursor prM and envelope protein E. The virion is transported to the Golgi apparatus where the low pH causes dissociation of PrM-E heterodimers and formation of E homodimers. Its function is as follows. Involved in immune evasion, pathogenesis and viral replication. Interacts with host MAVS and blocks MAVS binding to RIGI or IFIH1/MDA5, thereby leading to evasion of the innate immune response. Once cleaved off the polyprotein, is targeted to three destinations: the viral replication cycle, the plasma membrane and the extracellular compartment. Essential for viral replication. Required for formation of the replication complex and recruitment of other non-structural proteins to the ER-derived membrane structures. Excreted as a hexameric lipoparticle that plays a role against host immune response. Functionally, component of the viral RNA replication complex that functions in virion assembly. Required cofactor for the serine protease function of NS3. May have membrane-destabilizing activity and form viroporins. In terms of biological role, displays three enzymatic activities: serine protease, NTPase and RNA helicase. NS3 serine protease, in association with NS2B, performs its autocleavage and cleaves the polyprotein at dibasic sites in the cytoplasm: C-prM, NS2A-NS2B, NS2B-NS3, NS3-NS4A, NS4A-2K and NS4B-NS5. NS3 RNA helicase binds RNA and unwinds dsRNA in the 3' to 5' direction. Its function is as follows. Regulates the ATPase activity of the NS3 helicase activity. NS4A allows NS3 helicase to conserve energy during unwinding. Functionally, functions as a signal peptide for NS4B. Induces the formation of ER-derived membrane vesicles where the viral replication takes place. In terms of biological role, replicates the viral (+) and (-) RNA genome, and performs the capping of genomes in the cytoplasm. NS5 methylates viral RNA cap at guanine N-7 and ribose 2'-O positions. The chain is Genome polyprotein from Anas (ducks).